Reading from the N-terminus, the 667-residue chain is DNA ligase (667 aa).

Residues D32–D36, S81–L82, and E110 contribute to the NAD(+) site. The active-site N6-AMP-lysine intermediate is the K112. NAD(+) contacts are provided by R133, E167, K283, and K307. Residues C401, C404, C419, and C424 each coordinate Zn(2+). The region spanning E586 to S667 is the BRCT domain.

This sequence belongs to the NAD-dependent DNA ligase family. LigA subfamily. Mg(2+) is required as a cofactor. The cofactor is Mn(2+).

The enzyme catalyses NAD(+) + (deoxyribonucleotide)n-3'-hydroxyl + 5'-phospho-(deoxyribonucleotide)m = (deoxyribonucleotide)n+m + AMP + beta-nicotinamide D-nucleotide.. In terms of biological role, DNA ligase that catalyzes the formation of phosphodiester linkages between 5'-phosphoryl and 3'-hydroxyl groups in double-stranded DNA using NAD as a coenzyme and as the energy source for the reaction. It is essential for DNA replication and repair of damaged DNA. This Staphylococcus aureus (strain COL) protein is DNA ligase.